The chain runs to 36 residues: Zinc metalloproteinase-disintegrin-like VaH1 (36 aa).

A Peptidase M12B domain is found at 1-36 (MVTKYSSIFMSPILSNPPILYFSDCSREXYQKXLTN).

It belongs to the venom metalloproteinase (M12B) family. P-III subfamily. P-IIIa sub-subfamily. In terms of assembly, monomer. Requires Zn(2+) as cofactor. The N-terminus is blocked. In terms of processing, glycosylated. In terms of tissue distribution, expressed by the venom gland.

It localises to the secreted. Inhibited by EDTA, but not inhibited by iodoacetamide, PMSF and pepstatin A. In terms of biological role, snake venom zinc metalloprotease that exhibits strong hemorrhagic activity. It also degrades alpha-chain of fibrinogen (FGA), but not the beta- and the gamma-chains. Possesses potent azocaseinolytic activity and cleaves insulin B-chain, hydrolyzing it at positions Ala(14)-Leu(15), followed by Tyr(16)-Leu(17) and His(10)-Leu(11). In vivo, subcutaneous injection into mice induces strong hemorrhage. In Vipera ammodytes ammodytes (Western sand viper), this protein is Zinc metalloproteinase-disintegrin-like VaH1.